The following is a 735-amino-acid chain: Lebercilin-like protein (735 aa).

Disordered regions lie at residues 12-54 (TEAH…NGSV) and 91-115 (EKPLAKAKEKRKYNAGKLPQPRGQK). Over residues 43–53 (QSQNSQASNGS) the composition is skewed to low complexity. A coiled-coil region spans residues 205–335 (TAKHQNEVKN…QQKLKEKDRE (131 aa)). Disordered regions lie at residues 356 to 379 (YPKVSSTKSVQADRKSLPSVNMRH), 473 to 597 (SKEV…PRKH), 632 to 657 (KHRSEQELRLEPAGYEPSFGKGAGAR), and 685 to 735 (GRAG…KTVV). Basic and acidic residues predominate over residues 487-525 (TPRRPKENKEDQEKRAIPAEAEPTAKESEAHKDAEDKAL). Over residues 528–541 (AAGNAGDAGDAGDA) the composition is skewed to low complexity. Basic and acidic residues-rich tracts occupy residues 542–553 (GNDREVVGEHKV), 573–588 (EVHGAGEAPRDVEPGR), and 632–641 (KHRSEQELRL). Positions 689–707 (SSDSEAVSKSPQTGPQASA) are enriched in polar residues.

The protein belongs to the LCA5 family.

The polypeptide is Lebercilin-like protein (Mus musculus (Mouse)).